The primary structure comprises 394 residues: MLGRSLLTWVLAAAVTCAQAQQVPPWTEDCRKSTYPPSGPTYRGPVPWYTINLDLPPYKRWHELLAHKAPVLRTLVNSISNLVNAFVPSGKIMQMVDEKLPGLIGSIPGPFGEEMRGIADVTGIPLGEIISFNIFYELFTMCTSIITEDGKGHLLHGRNMDFGIFLGWNINNNTWVVTEELKPLTVNLDFQRNNKTVFKATSFAGYVGMLTGFKPGLLSLTLNERFSLNGGYLGILEWMFGKKNAQWVGFITRSVLENSTSYEEAKNILTKTKITAPAYFILGGNQSGEGCVITRERKESLDVYELDPKHGRWYVVQTNYDRWKNTLFLDDRRTPAKKCLNHTTQKNLSFATIYDVLSTKPVLNKLTVFTTLIDVTKDQFESHLRDCPDPCIGW.

The signal sequence occupies residues 1-20; it reads MLGRSLLTWVLAAAVTCAQA. Cys30 and Cys339 are joined by a disulfide. Residue Cys142 is the Nucleophile of the active site. Residues Asn194, Asn258, Asn285, and Asn341 are each glycosylated (N-linked (GlcNAc...) asparagine). A disulfide bridge links Cys387 with Cys391.

This sequence belongs to the acid ceramidase family. In terms of assembly, heterodimer; disulfide-linked. The heterodimer is composed of the disulfide-linked alpha and beta chains produced by autocatalytic cleavage of the precursor. In terms of processing, N-glycosylated. Proteolytically cleaved into two chains alpha and beta that remain associated via a disulfide bond. Cleavage gives rise to a conformation change that activates the enzyme. The same catalytic Cys residue mediates the autoproteolytic cleavage and subsequent hydrolysis of lipid substrates. The beta chain may undergo an additional C-terminal processing.

The protein resides in the lysosome. The protein localises to the secreted. It catalyses the reaction an N-acylsphing-4-enine + H2O = sphing-4-enine + a fatty acid. The catalysed reaction is N-dodecanoylsphing-4-enine + H2O = dodecanoate + sphing-4-enine. The enzyme catalyses N-tetradecanoylsphing-4-enine + H2O = tetradecanoate + sphing-4-enine. It carries out the reaction N-hexadecanoylsphing-4-enine + H2O = sphing-4-enine + hexadecanoate. It catalyses the reaction N-octadecanoylsphing-4-enine + H2O = sphing-4-enine + octadecanoate. The catalysed reaction is N-dodecanoyl-(4R)-hydroxysphinganine + H2O = (4R)-hydroxysphinganine + dodecanoate. The enzyme catalyses N-(dodecanoyl)-sphinganine + H2O = dodecanoate + sphinganine. It carries out the reaction N-(acetyl)-sphing-4-enine + H2O = sphing-4-enine + acetate. It catalyses the reaction N-(hexanoyl)sphing-4-enine + H2O = hexanoate + sphing-4-enine. The catalysed reaction is N-octanoylsphing-4-enine + H2O = octanoate + sphing-4-enine. The enzyme catalyses N-(9Z-octadecenoyl)-sphing-4-enine + H2O = sphing-4-enine + (9Z)-octadecenoate. It carries out the reaction N-dodecanoylethanolamine + H2O = dodecanoate + ethanolamine. Its pathway is lipid metabolism; sphingolipid metabolism. Functionally, lysosomal ceramidase that hydrolyzes sphingolipid ceramides into sphingosine and free fatty acids at acidic pH. Ceramides, sphingosine, and its phosphorylated form sphingosine-1-phosphate are bioactive lipids that mediate cellular signaling pathways regulating several biological processes including cell proliferation, apoptosis and differentiation. Has a higher catalytic efficiency towards C12-ceramides versus other ceramides. Also catalyzes the reverse reaction allowing the synthesis of ceramides from fatty acids and sphingosine. For the reverse synthetic reaction, the natural sphingosine D-erythro isomer is more efficiently utilized as a substrate compared to D-erythro-dihydrosphingosine and D-erythro-phytosphingosine, while the fatty acids with chain lengths of 12 or 14 carbons are the most efficiently used. Also has an N-acylethanolamine hydrolase activity. By regulating the levels of ceramides, sphingosine and sphingosine-1-phosphate in the epidermis, mediates the calcium-induced differentiation of epidermal keratinocytes. Also indirectly regulates tumor necrosis factor/TNF-induced apoptosis. By regulating the intracellular balance between ceramides and sphingosine, in adrenocortical cells, probably also acts as a regulator of steroidogenesis. In Rattus norvegicus (Rat), this protein is Acid ceramidase.